Consider the following 471-residue polypeptide: Argininosuccinate lyase (471 aa).

Belongs to the lyase 1 family. Argininosuccinate lyase subfamily.

It is found in the cytoplasm. The enzyme catalyses 2-(N(omega)-L-arginino)succinate = fumarate + L-arginine. It functions in the pathway amino-acid biosynthesis; L-arginine biosynthesis; L-arginine from L-ornithine and carbamoyl phosphate: step 3/3. The protein is Argininosuccinate lyase of Cereibacter sphaeroides (strain ATCC 17023 / DSM 158 / JCM 6121 / CCUG 31486 / LMG 2827 / NBRC 12203 / NCIMB 8253 / ATH 2.4.1.) (Rhodobacter sphaeroides).